The following is a 473-amino-acid chain: Bifunctional protein HldE (473 aa).

Positions 1–318 are ribokinase; it reads MKLSMPRFDQ…RAVQREEGSE (318 aa). 194-197 provides a ligand contact to ATP; the sequence is NLGE. The active site involves Asp263. The segment at 343–473 is cytidylyltransferase; sequence FTNGCFDILH…TAIVEKIRKA (131 aa).

It in the N-terminal section; belongs to the carbohydrate kinase PfkB family. The protein in the C-terminal section; belongs to the cytidylyltransferase family. As to quaternary structure, homodimer.

It catalyses the reaction D-glycero-beta-D-manno-heptose 7-phosphate + ATP = D-glycero-beta-D-manno-heptose 1,7-bisphosphate + ADP + H(+). The catalysed reaction is D-glycero-beta-D-manno-heptose 1-phosphate + ATP + H(+) = ADP-D-glycero-beta-D-manno-heptose + diphosphate. It participates in nucleotide-sugar biosynthesis; ADP-L-glycero-beta-D-manno-heptose biosynthesis; ADP-L-glycero-beta-D-manno-heptose from D-glycero-beta-D-manno-heptose 7-phosphate: step 1/4. Its pathway is nucleotide-sugar biosynthesis; ADP-L-glycero-beta-D-manno-heptose biosynthesis; ADP-L-glycero-beta-D-manno-heptose from D-glycero-beta-D-manno-heptose 7-phosphate: step 3/4. Catalyzes the phosphorylation of D-glycero-D-manno-heptose 7-phosphate at the C-1 position to selectively form D-glycero-beta-D-manno-heptose-1,7-bisphosphate. Its function is as follows. Catalyzes the ADP transfer from ATP to D-glycero-beta-D-manno-heptose 1-phosphate, yielding ADP-D-glycero-beta-D-manno-heptose. The polypeptide is Bifunctional protein HldE (Stutzerimonas stutzeri (strain A1501) (Pseudomonas stutzeri)).